We begin with the raw amino-acid sequence, 451 residues long: Phosphoglucosamine mutase (451 aa).

The active-site Phosphoserine intermediate is the serine 101. Residues serine 101, aspartate 242, aspartate 244, and aspartate 246 each coordinate Mg(2+). Serine 101 carries the post-translational modification Phosphoserine.

This sequence belongs to the phosphohexose mutase family. The cofactor is Mg(2+). Post-translationally, activated by phosphorylation.

It catalyses the reaction alpha-D-glucosamine 1-phosphate = D-glucosamine 6-phosphate. Functionally, catalyzes the conversion of glucosamine-6-phosphate to glucosamine-1-phosphate. In Beijerinckia indica subsp. indica (strain ATCC 9039 / DSM 1715 / NCIMB 8712), this protein is Phosphoglucosamine mutase.